We begin with the raw amino-acid sequence, 192 residues long: NADH-ubiquinone oxidoreductase subunit 9 (192 aa).

The protein belongs to the complex I 30 kDa subunit family. As to quaternary structure, complex I is composed of about 30 different subunits.

Its subcellular location is the mitochondrion inner membrane. It catalyses the reaction a ubiquinone + NADH + 5 H(+)(in) = a ubiquinol + NAD(+) + 4 H(+)(out). Its function is as follows. Core subunit of the mitochondrial membrane respiratory chain NADH dehydrogenase (Complex I) that is believed to belong to the minimal assembly required for catalysis. Complex I functions in the transfer of electrons from NADH to the respiratory chain. The immediate electron acceptor for the enzyme is believed to be ubiquinone. The protein is NADH-ubiquinone oxidoreductase subunit 9 (NAD9) of Prototheca wickerhamii.